A 353-amino-acid chain; its full sequence is Photosystem II protein D1 (353 aa).

An N-acetylthreonine modification is found at T2. T2 bears the Phosphothreonine mark. 3 consecutive transmembrane segments (helical) span residues Y29–S46, H118–L133, and W142–A156. H118 lines the chlorophyll a pocket. A pheophytin a-binding site is contributed by Y126. Residues D170 and E189 each coordinate [CaMn4O5] cluster. A helical membrane pass occupies residues F197–L218. H198 lines the chlorophyll a pocket. Residues H215 and S264–F265 contribute to the a quinone site. H215 contributes to the Fe cation binding site. Position 272 (H272) interacts with Fe cation. The chain crosses the membrane as a helical span at residues F274–L288. Positions 332, 333, 342, and 344 each coordinate [CaMn4O5] cluster. A propeptide spanning residues S345–G353 is cleaved from the precursor.

Belongs to the reaction center PufL/M/PsbA/D family. PSII is composed of 1 copy each of membrane proteins PsbA, PsbB, PsbC, PsbD, PsbE, PsbF, PsbH, PsbI, PsbJ, PsbK, PsbL, PsbM, PsbT, PsbX, PsbY, PsbZ, Psb30/Ycf12, at least 3 peripheral proteins of the oxygen-evolving complex and a large number of cofactors. It forms dimeric complexes. It depends on The D1/D2 heterodimer binds P680, chlorophylls that are the primary electron donor of PSII, and subsequent electron acceptors. It shares a non-heme iron and each subunit binds pheophytin, quinone, additional chlorophylls, carotenoids and lipids. D1 provides most of the ligands for the Mn4-Ca-O5 cluster of the oxygen-evolving complex (OEC). There is also a Cl(-1) ion associated with D1 and D2, which is required for oxygen evolution. The PSII complex binds additional chlorophylls, carotenoids and specific lipids. as a cofactor. Tyr-161 forms a radical intermediate that is referred to as redox-active TyrZ, YZ or Y-Z. In terms of processing, C-terminally processed by CTPA; processing is essential to allow assembly of the oxygen-evolving complex and thus photosynthetic growth.

Its subcellular location is the plastid. It is found in the chloroplast thylakoid membrane. The catalysed reaction is 2 a plastoquinone + 4 hnu + 2 H2O = 2 a plastoquinol + O2. In terms of biological role, photosystem II (PSII) is a light-driven water:plastoquinone oxidoreductase that uses light energy to abstract electrons from H(2)O, generating O(2) and a proton gradient subsequently used for ATP formation. It consists of a core antenna complex that captures photons, and an electron transfer chain that converts photonic excitation into a charge separation. The D1/D2 (PsbA/PsbD) reaction center heterodimer binds P680, the primary electron donor of PSII as well as several subsequent electron acceptors. This is Photosystem II protein D1 from Gnetum parvifolium (Small-leaved jointfir).